We begin with the raw amino-acid sequence, 60 residues long: UPF0434 protein KPK_3615 (60 aa).

It belongs to the UPF0434 family.

The polypeptide is UPF0434 protein KPK_3615 (Klebsiella pneumoniae (strain 342)).